Here is a 285-residue protein sequence, read N- to C-terminus: Shikimate dehydrogenase (NADP(+)) (285 aa).

Residues 22 to 24 (SMS) and T69 each bind shikimate. Residue K73 is the Proton acceptor of the active site. D85 contributes to the NADP(+) binding site. The shikimate site is built by N94 and D110. Residues 136 to 140 (GAGGA), 160 to 165 (NRTVAR), and M225 each bind NADP(+). Position 227 (Y227) interacts with shikimate. An NADP(+)-binding site is contributed by G248.

Belongs to the shikimate dehydrogenase family. As to quaternary structure, homodimer.

The catalysed reaction is shikimate + NADP(+) = 3-dehydroshikimate + NADPH + H(+). It functions in the pathway metabolic intermediate biosynthesis; chorismate biosynthesis; chorismate from D-erythrose 4-phosphate and phosphoenolpyruvate: step 4/7. Functionally, involved in the biosynthesis of the chorismate, which leads to the biosynthesis of aromatic amino acids. Catalyzes the reversible NADPH linked reduction of 3-dehydroshikimate (DHSA) to yield shikimate (SA). In Caulobacter vibrioides (strain ATCC 19089 / CIP 103742 / CB 15) (Caulobacter crescentus), this protein is Shikimate dehydrogenase (NADP(+)).